The following is a 42-amino-acid chain: MDSNFLKYLSTAPVLFTVWLSFTASFIIEANRFFPDMLYFPM.

Residues 8–28 form a helical membrane-spanning segment; the sequence is YLSTAPVLFTVWLSFTASFII.

Belongs to the PsaJ family.

The protein localises to the plastid. It localises to the chloroplast thylakoid membrane. Functionally, may help in the organization of the PsaE and PsaF subunits. The protein is Photosystem I reaction center subunit IX of Rhodomonas salina (Cryptomonas salina).